Here is a 70-residue protein sequence, read N- to C-terminus: Large ribosomal subunit protein bL31 (70 aa).

The residue at position 8 (Lys-8) is an N6-acetyllysine. Residues Cys-16, Cys-18, Cys-37, and Cys-40 each coordinate Zn(2+).

It belongs to the bacterial ribosomal protein bL31 family. Type A subfamily. As to quaternary structure, part of the 50S ribosomal subunit. The cofactor is Zn(2+).

Its function is as follows. Binds the 23S rRNA. In Shigella flexneri, this protein is Large ribosomal subunit protein bL31.